Consider the following 106-residue polypeptide: Large ribosomal subunit protein uL23 (106 aa).

It belongs to the universal ribosomal protein uL23 family. Part of the 50S ribosomal subunit. Contacts protein L29, and trigger factor when it is bound to the ribosome.

In terms of biological role, one of the early assembly proteins it binds 23S rRNA. One of the proteins that surrounds the polypeptide exit tunnel on the outside of the ribosome. Forms the main docking site for trigger factor binding to the ribosome. In Acinetobacter baumannii (strain AB307-0294), this protein is Large ribosomal subunit protein uL23.